A 159-amino-acid polypeptide reads, in one-letter code: Ribosomal RNA large subunit methyltransferase H (159 aa).

S-adenosyl-L-methionine is bound by residues Leu76 and Gly108.

The protein belongs to the RNA methyltransferase RlmH family. As to quaternary structure, homodimer.

It is found in the cytoplasm. The catalysed reaction is pseudouridine(1915) in 23S rRNA + S-adenosyl-L-methionine = N(3)-methylpseudouridine(1915) in 23S rRNA + S-adenosyl-L-homocysteine + H(+). Functionally, specifically methylates the pseudouridine at position 1915 (m3Psi1915) in 23S rRNA. This Limosilactobacillus fermentum (strain NBRC 3956 / LMG 18251) (Lactobacillus fermentum) protein is Ribosomal RNA large subunit methyltransferase H.